The chain runs to 1251 residues: Myosin-1 (1251 aa).

The disordered stretch occupies residues 1–37 (MGQSKRPFKNKEEKKSRGFGRSRHDDAGAGGRPQVKK). Residues 9–27 (KNKEEKKSRGFGRSRHDDA) are compositionally biased toward basic and acidic residues. The Myosin motor domain occupies 48-727 (IGVSDLTLLS…TLFALEHMRD (680 aa)). An ATP-binding site is contributed by 141 to 148 (GESGAGKT). Residue Ser369 is modified to Phosphoserine. The interval 416-498 (TIGILDIYGF…PGVFAALNDA (83 aa)) is actin-binding. 2 consecutive IQ domains span residues 731–751 (HNMA…RTEC) and 752–777 (AIRI…QGHK). Residues 785 to 980 (RRRYSLVGSR…PGEPANSVSK (196 aa)) form the TH1 domain. Disordered regions lie at residues 958-1093 (RDDV…SNEL) and 1135-1227 (AKTP…ASIA). Low complexity predominate over residues 1040–1052 (VAQSVTAVAAAHA). Residues 1061–1073 (RPPPPPPPTQPPA) show a composition bias toward pro residues. Positions 1074–1135 (PKKDTAKALY…PEAYLEPIVA (62 aa)) constitute an SH3 domain. Pro residues predominate over residues 1139–1148 (SLPPPPPSLP). 2 stretches are compositionally biased toward polar residues: residues 1150–1161 (QSKSAVSNTLPN) and 1216–1225 (ATPSSLSNAS).

This sequence belongs to the TRAFAC class myosin-kinesin ATPase superfamily. Myosin family. Post-translationally, phosphorylation of the TEDS site (Ser-369) is required for the polarization of the actin cytoskeleton. Phosphorylation probably activates the myosin-I ATPase activity.

The protein resides in the cytoplasm. It localises to the cytoskeleton. It is found in the actin patch. Functionally, type-I myosin implicated in the organization of the actin cytoskeleton. Required for proper actin cytoskeleton polarization. At the cell cortex, assembles in patch-like structures together with proteins from the actin-polymerizing machinery and promotes actin assembly. Functions as actin nucleation-promoting factor (NPF) for the Arp2/3 complex. In Coccidioides immitis (strain RS) (Valley fever fungus), this protein is Myosin-1 (MYO1).